We begin with the raw amino-acid sequence, 308 residues long: MKITTIAKTSLALGLLTTGVITTTTQAANATTPSSTKVEAPQSTPPSTKIEAPQSKPNATTPPSTKVEAPQQTANATTPPSTKVTTPPSTNTPQPMQSTKSDTPQSPTTKQVPTEINPKFKDLRAYYTKPSLEFKNEIGIILKKWTTIRFMNVVPDYFIYKIALVGKDDKKYGEGVHRNVDVFVVLEENNYNLEKYSVGGITKSNSKKVDHKAGVRITKEDNKGTISHDVSEFKITKEQISLKELDFKLRKQLIEKNNLYGNVGSGKIVIKMKNGGKYTFELHKKLQENRMADVIDGTNIDNIEVNIK.

Residues 1-30 (MKITTIAKTSLALGLLTTGVITTTTQAANA) form the signal peptide. The segment at 28 to 117 (ANATTPSSTK…TTKQVPTEIN (90 aa)) is disordered. Composition is skewed to polar residues over residues 33 to 47 (PSSTKVEAPQSTPPS) and 55 to 76 (SKPNATTPPSTKVEAPQQTANA). Positions 77–93 (TTPPSTKVTTPPSTNTP) are enriched in low complexity. The span at 94 to 114 (QPMQSTKSDTPQSPTTKQVPT) shows a compositional bias: polar residues. A sialyl Lewis X-binding region spans residues 180 to 278 (VDVFVVLEEN…VIKMKNGGKY (99 aa)).

Belongs to the staphylococcal/streptococcal toxin family.

It is found in the secreted. Its function is as follows. Secreted protein that plays a role in immune innate response inhibition by interfering with host TLR2-mediated pathway. This chain is Staphylococcal superantigen-like 4, found in Staphylococcus aureus (strain Newman).